The following is a 319-amino-acid chain: Lipooligosaccharide heptosyltransferase 2 (319 aa).

The protein belongs to the glycosyltransferase 9 family.

It catalyses the reaction an L-alpha-D-Hep-(1-&gt;5)-[alpha-Kdo-(2-&gt;4)]-alpha-Kdo-(2-&gt;6)-lipid A + ADP-L-glycero-beta-D-manno-heptose = an L-alpha-D-Hep-(1-&gt;3)-L-alpha-D-Hep-(1-&gt;5)-[alpha-Kdo-(2-&gt;4)]-alpha-Kdo-(2-&gt;6)-lipid A + ADP + H(+). The protein operates within bacterial outer membrane biogenesis; LOS core biosynthesis. In terms of biological role, glycosyltransferase involved in the biosynthesis of the core oligosaccharide region of lipooligosaccharide (LOS). Catalyzes the addition of the second heptose unit to the heptosyl-Kdo2-lipid A module. The protein is Lipooligosaccharide heptosyltransferase 2 of Campylobacter jejuni subsp. jejuni serotype O:2 (strain ATCC 700819 / NCTC 11168).